Reading from the N-terminus, the 58-residue chain is Metallothionein-1 (58 aa).

The segment at 1-28 (PGPCCKDKCECAEGGCKTGCKCTSCRCA) is beta. A divalent metal cation contacts are provided by cysteine 4, cysteine 5, cysteine 9, cysteine 11, cysteine 16, cysteine 20, cysteine 22, cysteine 25, cysteine 27, cysteine 30, cysteine 33, cysteine 37, cysteine 39, cysteine 45, cysteine 49, cysteine 53, cysteine 55, and cysteine 56. Positions 29–58 (PCEKCTSGCKCPSKDECAKTCSKPCSCCXX) are alpha.

It belongs to the metallothionein superfamily. Type 3 family.

In terms of biological role, metallothioneins have a high content of cysteine residues that bind various heavy metals. The different forms of lobster metallothioneins may have different biological functions. Class I MTS in marine crustacea are involved in the sequestration of elevated levels of heavy-metal ions. Binds 6 metal ions. Known to bind cadmium. This chain is Metallothionein-1, found in Homarus americanus (American lobster).